The sequence spans 187 residues: UPF0301 protein SO_3346 (187 aa).

The protein belongs to the UPF0301 (AlgH) family.

This is UPF0301 protein SO_3346 from Shewanella oneidensis (strain ATCC 700550 / JCM 31522 / CIP 106686 / LMG 19005 / NCIMB 14063 / MR-1).